The primary structure comprises 504 residues: Cytochrome P450 6B2 (504 aa).

A heme-binding site is contributed by cysteine 445.

Belongs to the cytochrome P450 family. It depends on heme as a cofactor.

The protein localises to the endoplasmic reticulum membrane. It is found in the microsome membrane. The catalysed reaction is an organic molecule + reduced [NADPH--hemoprotein reductase] + O2 = an alcohol + oxidized [NADPH--hemoprotein reductase] + H2O + H(+). In Helicoverpa armigera (Cotton bollworm), this protein is Cytochrome P450 6B2 (CYP6B2).